Consider the following 717-residue polypeptide: Polyribonucleotide nucleotidyltransferase (717 aa).

2 residues coordinate Mg(2+): D488 and D494. The region spanning 555-614 (PRIEVMNIPVDKIREVIGSGGKVIREIVEKTGAKINIEDDGTVKIASSSGKEIEAARKWI) is the KH domain. The 69-residue stretch at 624-692 (GQIYEGTVVK…ERGKVRLSMK (69 aa)) folds into the S1 motif domain.

This sequence belongs to the polyribonucleotide nucleotidyltransferase family. Requires Mg(2+) as cofactor.

The protein localises to the cytoplasm. The enzyme catalyses RNA(n+1) + phosphate = RNA(n) + a ribonucleoside 5'-diphosphate. Functionally, involved in mRNA degradation. Catalyzes the phosphorolysis of single-stranded polyribonucleotides processively in the 3'- to 5'-direction. The chain is Polyribonucleotide nucleotidyltransferase from Sinorhizobium fredii (strain NBRC 101917 / NGR234).